Reading from the N-terminus, the 211-residue chain is Phosphatidylglycerophosphatase C (211 aa).

The Cytoplasmic segment spans residues 1-33; the sequence is MATHERRVVFFDLDGTLHQQDMFGSFLRYLLRR. Residues 34–54 form a helical membrane-spanning segment; it reads QPLNALLVLPLLPIIAIALLI. Over 55–211 the chain is Periplasmic; it reads KGRAARWPMS…TPRGELQQLE (157 aa).

Mg(2+) is required as a cofactor.

The protein localises to the cell inner membrane. It catalyses the reaction a 1,2-diacyl-sn-glycero-3-phospho-(1'-sn-glycero-3'-phosphate) + H2O = a 1,2-diacyl-sn-glycero-3-phospho-(1'-sn-glycerol) + phosphate. It functions in the pathway phospholipid metabolism; phosphatidylglycerol biosynthesis; phosphatidylglycerol from CDP-diacylglycerol: step 2/2. Lipid phosphatase which dephosphorylates phosphatidylglycerophosphate (PGP) to phosphatidylglycerol (PG). In Escherichia coli (strain K12), this protein is Phosphatidylglycerophosphatase C (pgpC).